We begin with the raw amino-acid sequence, 784 residues long: Lon protease (784 aa).

The Lon N-terminal domain maps to 6–207 (LPLMALRDMV…TVITTLTSNI (202 aa)). 356-363 (GPPGVGKT) contributes to the ATP binding site. The Lon proteolytic domain occupies 592–773 (EDQIGSTTGL…DQVLKHALVE (182 aa)). Residues Ser-679 and Lys-722 contribute to the active site.

The protein belongs to the peptidase S16 family. As to quaternary structure, homohexamer. Organized in a ring with a central cavity.

It localises to the cytoplasm. It catalyses the reaction Hydrolysis of proteins in presence of ATP.. Functionally, ATP-dependent serine protease that mediates the selective degradation of mutant and abnormal proteins as well as certain short-lived regulatory proteins. Required for cellular homeostasis and for survival from DNA damage and developmental changes induced by stress. Degrades polypeptides processively to yield small peptide fragments that are 5 to 10 amino acids long. Binds to DNA in a double-stranded, site-specific manner. In Rickettsia typhi (strain ATCC VR-144 / Wilmington), this protein is Lon protease.